We begin with the raw amino-acid sequence, 326 residues long: Probable cell division protein WhiA (326 aa).

Positions 275 to 308 (SLEELGQLSDPPLTKDAVAGRIRRLLAMADKKAS) form a DNA-binding region, H-T-H motif.

This sequence belongs to the WhiA family.

Functionally, involved in cell division and chromosome segregation. The polypeptide is Probable cell division protein WhiA (Beutenbergia cavernae (strain ATCC BAA-8 / DSM 12333 / CCUG 43141 / JCM 11478 / NBRC 16432 / NCIMB 13614 / HKI 0122)).